The chain runs to 115 residues: NADH-ubiquinone oxidoreductase chain 3 (115 aa).

3 helical membrane passes run 3 to 23 (LMIT…IAFW), 55 to 75 (FFLV…LLPL), and 84 to 104 (LNTM…SLAY).

This sequence belongs to the complex I subunit 3 family. Core subunit of respiratory chain NADH dehydrogenase (Complex I) which is composed of 45 different subunits. Interacts with TMEM186. Interacts with TMEM242.

The protein localises to the mitochondrion inner membrane. It catalyses the reaction a ubiquinone + NADH + 5 H(+)(in) = a ubiquinol + NAD(+) + 4 H(+)(out). Functionally, core subunit of the mitochondrial membrane respiratory chain NADH dehydrogenase (Complex I) which catalyzes electron transfer from NADH through the respiratory chain, using ubiquinone as an electron acceptor. Essential for the catalytic activity of complex I. The protein is NADH-ubiquinone oxidoreductase chain 3 of Ovis aries (Sheep).